Here is a 450-residue protein sequence, read N- to C-terminus: Keratin, type I cytoskeletal 25 (450 aa).

The tract at residues 1–25 (MSLRLPSGSRRASPRPTTGSLRLSS) is disordered. Residues 1-78 (MSLRLPSGSR…VNEGGLLSGN (78 aa)) are head. The interval 79–114 (EKVTMQNLNDRLASYLENVRALEEANADLEQKIKGW) is coil 1A. The region spanning 79 to 394 (EKVTMQNLND…LLIGGDDGAC (316 aa)) is the IF rod domain. Positions 115–136 (YEKFGPGSCRGLDHDYSRYFPI) are linker 1. A coil 1B region spans residues 137-228 (IEDLKNQIIA…KNHKEEMQVL (92 aa)). Residues 229–251 (QCAAGGNVNVEMNAAPGVDLTVL) are linker 12. A coil 2 region spans residues 252–390 (LNNMRAEYEA…ETYCLLIGGD (139 aa)). Residues 391–450 (DGACKSGGYKSKDYGAGNVGNQMKDPVKAIVVKKVLEEVDQRSKILTPRLHSLEEKSQSN) form a tail region. Serine 442 is modified (phosphoserine).

The protein belongs to the intermediate filament family. As to quaternary structure, heterodimer of a type I and a type II keratin. Heterodimer with type II keratin KRT5 leading to the formation of keratin intermediate filament (KIF) network. Interacts with KRT6A to form filaments.

The protein localises to the cytoplasm. In terms of biological role, essential for the proper assembly of type I and type II keratin protein complexes and formation of keratin intermediate filaments in the inner root sheath (irs). Plays a role in the cytoskeleton organization. The protein is Keratin, type I cytoskeletal 25 of Bos taurus (Bovine).